The sequence spans 292 residues: 4-hydroxy-tetrahydrodipicolinate synthase (292 aa).

Thr45 contributes to the pyruvate binding site. The Proton donor/acceptor role is filled by Tyr133. The active-site Schiff-base intermediate with substrate is the Lys161. Ile203 is a binding site for pyruvate.

The protein belongs to the DapA family. In terms of assembly, homotetramer; dimer of dimers.

The protein localises to the cytoplasm. The catalysed reaction is L-aspartate 4-semialdehyde + pyruvate = (2S,4S)-4-hydroxy-2,3,4,5-tetrahydrodipicolinate + H2O + H(+). It functions in the pathway amino-acid biosynthesis; L-lysine biosynthesis via DAP pathway; (S)-tetrahydrodipicolinate from L-aspartate: step 3/4. Catalyzes the condensation of (S)-aspartate-beta-semialdehyde [(S)-ASA] and pyruvate to 4-hydroxy-tetrahydrodipicolinate (HTPA). The sequence is that of 4-hydroxy-tetrahydrodipicolinate synthase from Aromatoleum aromaticum (strain DSM 19018 / LMG 30748 / EbN1) (Azoarcus sp. (strain EbN1)).